The chain runs to 74 residues: Large ribosomal subunit protein uL29 (74 aa).

Belongs to the universal ribosomal protein uL29 family.

The sequence is that of Large ribosomal subunit protein uL29 from Streptomyces avermitilis (strain ATCC 31267 / DSM 46492 / JCM 5070 / NBRC 14893 / NCIMB 12804 / NRRL 8165 / MA-4680).